Reading from the N-terminus, the 790-residue chain is Pentatricopeptide repeat-containing protein At1g25360 (790 aa).

16 PPR repeats span residues Arg48–Ala82, Thr84–Cys109, Asp112–Pro146, Asp147–Tyr182, Ile183–Lys217, Asp218–Asn248, Lys250–Leu284, Asp285–Arg315, Ser319–Lys349, Asp350–Ser384, Trp385–Pro415, Cys416–Ser450, Ser451–Leu481, Asp482–Pro516, Asp517–Pro551, and Gly553–Lys583. A type E motif region spans residues Ile588–Glu663. The type E(+) motif stretch occupies residues Thr664–Arg694. Positions Arg695–Trp790 are type DYW motif.

The protein belongs to the PPR family. PCMP-H subfamily.

The sequence is that of Pentatricopeptide repeat-containing protein At1g25360 (PCMP-H74) from Arabidopsis thaliana (Mouse-ear cress).